We begin with the raw amino-acid sequence, 145 residues long: Large ribosomal subunit protein uL16 (145 aa).

Belongs to the universal ribosomal protein uL16 family. Part of the 50S ribosomal subunit.

Functionally, binds 23S rRNA and is also seen to make contacts with the A and possibly P site tRNAs. The protein is Large ribosomal subunit protein uL16 of Desulfitobacterium hafniense (strain DSM 10664 / DCB-2).